A 148-amino-acid polypeptide reads, in one-letter code: SsrA-binding protein (148 aa).

It belongs to the SmpB family.

Its subcellular location is the cytoplasm. Functionally, required for rescue of stalled ribosomes mediated by trans-translation. Binds to transfer-messenger RNA (tmRNA), required for stable association of tmRNA with ribosomes. tmRNA and SmpB together mimic tRNA shape, replacing the anticodon stem-loop with SmpB. tmRNA is encoded by the ssrA gene; the 2 termini fold to resemble tRNA(Ala) and it encodes a 'tag peptide', a short internal open reading frame. During trans-translation Ala-aminoacylated tmRNA acts like a tRNA, entering the A-site of stalled ribosomes, displacing the stalled mRNA. The ribosome then switches to translate the ORF on the tmRNA; the nascent peptide is terminated with the 'tag peptide' encoded by the tmRNA and targeted for degradation. The ribosome is freed to recommence translation, which seems to be the essential function of trans-translation. This chain is SsrA-binding protein, found in Azoarcus sp. (strain BH72).